A 503-amino-acid chain; its full sequence is Hexose transporter 1 (503 aa).

Residues 1–26 are Cytoplasmic-facing; sequence MKKSSKEISPSQSLKNGGSDHFFNTS. Residues 27–47 form a helical membrane-spanning segment; that stretch reads LMYVLAACLASFIFGYQVSVL. The Extracellular portion of the chain corresponds to 48–76; that stretch reads NTIKNFIVIEFGWCTGNKVECDDSTLKSS. Cys-61 and Cys-68 are disulfide-bonded. A helical transmembrane segment spans residues 77-97; the sequence is FLLASVFIGAVVGSGFSDYLV. Residues 98–102 lie on the Cytoplasmic side of the membrane; sequence QHGRR. The helical transmembrane segment at 103-123 threads the bilayer; that stretch reads FSLLVIYNFFILVSILTSITH. At 124-132 the chain is on the extracellular side; it reads HFHTILFSR. The chain crosses the membrane as a helical span at residues 133-153; it reads LLSGFGVGLITVSVPMYISEM. At 154-163 the chain is on the cytoplasmic side; sequence THKDKKGAYG. A helical transmembrane segment spans residues 164–184; sequence VLHQLFITFGILVAVLLGMAM. Gln-167 lines the alpha-D-glucose pocket. Gln-167 contributes to the beta-D-glucose binding site. Residues 185–205 lie on the Extracellular side of the membrane; sequence GEAPDAKSVDALGEFQKIWWR. Residues 206–226 traverse the membrane as a helical segment; it reads LMFFFPCLISILGIVLLTFFY. Over 227-291 the chain is Cytoplasmic; the sequence is KEETPYYLFE…RAMQIPSYRN (65 aa). Residues 292–312 form a helical membrane-spanning segment; that stretch reads VILLGCILSGLQQFTGINVLV. Alpha-D-glucose-binding residues include Gln-303, Gln-304, and Asn-309. Gln-303 contributes to the beta-D-glucose binding site. Residue Asn-309 participates in beta-D-glucose binding. At 313–329 the chain is on the extracellular side; it reads SNSNELYKEFLSNKLIT. The chain crosses the membrane as a helical span at residues 330–350; that stretch reads TLSVIMTVVNFLMTFPAIYIV. Asn-339 lines the beta-D-glucose pocket. Residues 351–356 lie on the Cytoplasmic side of the membrane; it reads EKLGRK. Residues 357-377 form a helical membrane-spanning segment; it reads TLLLCGCAGVTLAAFLPTAIA. Residues 378 to 391 are Extracellular-facing; the sequence is NQIDRSSDLVRNLS. The helical transmembrane segment at 392-412 threads the bilayer; the sequence is IAATFVMIISFAVSYGPVLWI. Trp-411 provides a ligand contact to alpha-D-glucose. The Cytoplasmic portion of the chain corresponds to 413–428; sequence YLHEMFPSEIKDSAAS. A helical transmembrane segment spans residues 429–449; it reads LASLVNWVCAIIVVFPSDIII. Topologically, residues 450–454 are extracellular; it reads KKSPT. The chain crosses the membrane as a helical span at residues 455–475; it reads ILFFIFSGMSILSFLFIFFFI. At 476–503 the chain is on the cytoplasmic side; the sequence is KETKGGEIGTSPYITMEERQKHMGKSAV.

The protein belongs to the major facilitator superfamily. Sugar transporter (TC 2.A.1.1) family. As to quaternary structure, homodimer.

The protein localises to the cell membrane. It carries out the reaction D-glucose(out) = D-glucose(in). The enzyme catalyses D-fructose(out) = D-fructose(in). It catalyses the reaction D-galactose(in) = D-galactose(out). The catalysed reaction is D-mannose(out) = D-mannose(in). It carries out the reaction D-glucosamine(out) = D-glucosamine(in). The enzyme catalyses D-xylose(out) = D-xylose(in). Its activity is regulated as follows. Inhibited by compound 3361 (3-O-((undec-10-en)-1-yl)-D-glucose). Sodium-independent facilitative hexose transporter. Can transport D-glucose and D-fructose. Can transport D-mannose, D-galactose, D-xylose and D-glucosamine. This is Hexose transporter 1 from Plasmodium vivax.